We begin with the raw amino-acid sequence, 1021 residues long: MGKGVGRDKYEPAAVSEHGDKKKAKKERDMDELKKEVSMDDHKLSLDELHRKYGTDLSRGLTPARAAEILARDGPNALTPPPTTPEWVKFCRQLFGGFSMLLWIGAILCFLAYGIQAATEEEPQNDNLYLGVVLSAVVIITGCFSYYQEAKSSKIMESFKNMVPQQALVIRNGEKMSINAEEVVVGDLVEVKGGDRIPADLRIISANGCKVDNSSLTGESEPQTRSPDFTNENPLETRNIAFFSTNCVEGTARGIVVYTGDRTVMGRIATLASGLEGGQTPIAAEIEHFIHIITGVAVFLGVSFFILSLILEYTWLEAVIFLIGIIVANVPEGLLATVTVCLTLTAKRMARKNCLVKNLEAVETLGSTSTICSDKTGTLTQNRMTVAHMWSDNQIHEADTTENQSGVSFDKTSATWLALSRIAGLCNRAVFQANQENLPILKRAVAGDASESALLKCIELCCGSVKEMRERYTKIVEIPFNSTNKYQLSIHKNPNTAEPRHLLVMKGAPERILDRCSSILIHGKEQPLDEELKDAFQNAYLELGGLGERVLGFCHLFLPDEQFPEGFQFDTDDVNFPLDNLCFVGLISMIDPPRAAVPDAVGKCRSAGIKVIMVTGDHPITAKAIAKGVGIISEGNETVEDIAARLNIPVSQVNPRDAKACVVHGSDLKDMTSEQLDDILKYHTEIVFARTSPQQKLIIVEGCQRQGAIVAVTGDGVNDSPASKKADIGVAMGIAGSDVSKQAADMILLDDNFASIVTGVEEGRLIFDNLKKSIAYTLTSNIPEITPFLIFIIANIPLPLGTVTILCIDLGTDMVPAISLAYEQAESDIMKRQPRNPKTDKLVNEQLISMAYGQIGMIQALGGFFTYFVILAENGFLPIHLLGLRVNWDDRWINDVEDSYGQQWTYEQRKIVEFTCHTPFFVTIVVVQWADLVICKTRRNSVFQQGMKNKILIFGLFEETALAAFLSYCPGMGVALRMYPLKPTWWFCAFPYSLLIFVYDEVRKLIIRRRPGGWVEKETYY.

Residues 1 to 5 (MGKGV) constitute a propeptide that is removed on maturation. The segment covering 1-11 (MGKGVGRDKYE) has biased composition (basic and acidic residues). Residues 1-37 (MGKGVGRDKYEPAAVSEHGDKKKAKKERDMDELKKEV) are disordered. Residues 6–85 (GRDKYEPAAV…NALTPPPTTP (80 aa)) lie on the Cytoplasmic side of the membrane. Lys-9 carries the post-translational modification N6-acetyllysine. Phosphotyrosine is present on Tyr-10. Residue Ser-16 is modified to Phosphoserine; by PKC. Lys-21 carries the post-translational modification N6-acetyllysine. The span at 26–37 (KERDMDELKKEV) shows a compositional bias: basic and acidic residues. A phosphoserine mark is found at Ser-38 and Ser-45. The phosphoinositide-3 kinase binding stretch occupies residues 80-82 (PPP). Residues 86–106 (EWVKFCRQLFGGFSMLLWIGA) traverse the membrane as a helical segment. The Extracellular portion of the chain corresponds to 107 to 129 (ILCFLAYGIQAATEEEPQNDNLY). A helical transmembrane segment spans residues 130–150 (LGVVLSAVVIITGCFSYYQEA). Topologically, residues 151–286 (KSSKIMESFK…GGQTPIAAEI (136 aa)) are cytoplasmic. The interval 214-233 (SSLTGESEPQTRSPDFTNEN) is disordered. Ser-226 carries the phosphoserine modification. Position 258 is a phosphotyrosine (Tyr-258). Residues 287–306 (EHFIHIITGVAVFLGVSFFI) form a helical membrane-spanning segment. Topologically, residues 307–318 (LSLILEYTWLEA) are extracellular. Residues 319–336 (VIFLIGIIVANVPEGLLA) form a helical membrane-spanning segment. At 337 to 770 (TVTVCLTLTA…EEGRLIFDNL (434 aa)) the chain is on the cytoplasmic side. Asp-374 functions as the 4-aspartylphosphate intermediate in the catalytic mechanism. Phosphoserine occurs at positions 450 and 482. An ATP-binding site is contributed by Lys-485. Tyr-540 is modified (phosphotyrosine). Residues 594–715 (RAAVPDAVGK…QGAIVAVTGD (122 aa)) are mediates interaction with SCN7A. N6-succinyllysine is present on Lys-659. Ser-666 and Ser-673 each carry phosphoserine. The Mg(2+) site is built by Asp-715 and Asp-719. The helical transmembrane segment at 771–790 (KKSIAYTLTSNIPEITPFLI) threads the bilayer. Over 791 to 800 (FIIANIPLPL) the chain is Extracellular. Residues 801–821 (GTVTILCIDLGTDMVPAISLA) form a helical membrane-spanning segment. The Cytoplasmic segment spans residues 822 to 841 (YEQAESDIMKRQPRNPKTDK). Residues 842–864 (LVNEQLISMAYGQIGMIQALGGF) form a helical membrane-spanning segment. Topologically, residues 865–916 (FTYFVILAENGFLPIHLLGLRVNWDDRWINDVEDSYGQQWTYEQRKIVEFTC) are extracellular. Residues 917-936 (HTPFFVTIVVVQWADLVICK) traverse the membrane as a helical segment. The Cytoplasmic segment spans residues 937 to 949 (TRRNSVFQQGMKN). Ser-941 is subject to Phosphoserine; by PKA. The helical transmembrane segment at 950-968 (KILIFGLFEETALAAFLSY) threads the bilayer. Residues 969–983 (CPGMGVALRMYPLKP) are Extracellular-facing. Residues 984-1004 (TWWFCAFPYSLLIFVYDEVRK) form a helical membrane-spanning segment. The Cytoplasmic portion of the chain corresponds to 1005–1021 (LIIRRRPGGWVEKETYY).

The protein belongs to the cation transport ATPase (P-type) (TC 3.A.3) family. Type IIC subfamily. In terms of assembly, the sodium/potassium-transporting ATPase is composed of a catalytic alpha subunit, an auxiliary non-catalytic beta subunit and an additional regulatory subunit. Interacts with regulatory subunit FXYD1. Interacts with regulatory subunit FXYD3. Interacts with SIK1. Interacts with SLC35G1 and STIM1. Interacts with CLN3; this interaction regulates the sodium/potassium-transporting ATPase complex localization at the plasma membrane. Interacts with SCN7A; activates ATP1A1 P-type sodium:potassium-exchanging transporter activity which indirectly signals to nearby neurons to regulate sodium homeostasis. Post-translationally, phosphorylation on Tyr-10 modulates pumping activity. Phosphorylation of Ser-941 by PKA modulates the response of ATP1A1 to PKC. Dephosphorylation by protein phosphatase 2A (PP2A) following increases in intracellular sodium, leading to increase catalytic activity.

It localises to the cell membrane. The protein localises to the basolateral cell membrane. Its subcellular location is the sarcolemma. It is found in the cell projection. The protein resides in the axon. It localises to the melanosome. The enzyme catalyses K(+)(out) + Na(+)(in) + ATP + H2O = K(+)(in) + Na(+)(out) + ADP + phosphate + H(+). This is the catalytic component of the active enzyme, which catalyzes the hydrolysis of ATP coupled with the exchange of sodium and potassium ions across the plasma membrane. This action creates the electrochemical gradient of sodium and potassium ions, providing the energy for active transport of various nutrients. Could also be part of an osmosensory signaling pathway that senses body-fluid sodium levels and controls salt intake behavior as well as voluntary water intake to regulate sodium homeostasis. This is Sodium/potassium-transporting ATPase subunit alpha-1 (ATP1A1) from Sus scrofa (Pig).